We begin with the raw amino-acid sequence, 158 residues long: Retinoic acid receptor beta (158 aa).

A compositionally biased stretch (low complexity) spans 1–18 (RHSAQSIETQSTSSEELV). Residues 1–24 (RHSAQSIETQSTSSEELVPSPPSP) are disordered. The nuclear receptor DNA-binding region spans 31–106 (YKPCFVCQDK…VGMSKESVRN (76 aa)). NR C4-type zinc fingers lie at residues 34–54 (CFVC…CEGC) and 70–94 (CHRD…LQRC). An NR LBD domain is found at 129 to 158 (ELDDLTEKIRKAHQETFPSLCQLGKYTTNS).

Belongs to the nuclear hormone receptor family. NR1 subfamily. Heterodimer; with a RXR molecule. Binds DNA preferentially as a RAR/RXR heterodimer.

The protein resides in the nucleus. In terms of biological role, receptor for retinoic acid. Retinoic acid receptors bind as heterodimers to their target response elements in response to their ligands, all-trans or 9-cis retinoic acid, and regulate gene expression in various biological processes. The RAR/RXR heterodimers bind to the retinoic acid response elements (RARE) composed of tandem 5'-AGGTCA-3' sites known as DR1-DR5. The protein is Retinoic acid receptor beta (RARB) of Notophthalmus viridescens (Eastern newt).